The primary structure comprises 450 residues: L-lysine-epsilon aminotransferase (450 aa).

Positions 127 and 128 each coordinate pyridoxal 5'-phosphate. Positions 168 and 274 each coordinate 2-oxoglutarate. R168 lines the L-lysine pocket. Q274 is a binding site for pyridoxal 5'-phosphate. An N6-(pyridoxal phosphate)lysine modification is found at K300. A 2-oxoglutarate-binding site is contributed by R423.

Belongs to the class-III pyridoxal-phosphate-dependent aminotransferase family. Pyridoxal 5'-phosphate is required as a cofactor.

It catalyses the reaction L-lysine + 2-oxoglutarate = (S)-2-amino-6-oxohexanoate + L-glutamate. Its pathway is antibiotic biosynthesis; cephamycin C biosynthesis. Functionally, catalyzes the transfer of the terminal amino group of L-lysine to alpha-ketoglutarate to yield L-glutamate and 2-aminoadipate 6-semialdehyde ((S)-2-amino-6-oxohexanoate), which is spontaneously converted to the dehydrated form 1-piperideine 6-carboxylate. In Amycolatopsis lactamdurans (Nocardia lactamdurans), this protein is L-lysine-epsilon aminotransferase.